The sequence spans 355 residues: MGRFSEDSADEPDEREMSAALTVGEGDIDASLRPRSLGEFIGQPRVREQLQLVLEGAKNRGGTPDHILLSGPPGLGKTSLAMIIAAELGSSLRVTSGPALERAGDLAAMLSNLVEHDVLFIDEIHRIARPAEEMLYLAMEDFRVDVVVGKGPGATSIPLEVAPFTLVGATTRSGALTGPLRDRFGFTAHMDFYEPSELERVLARSAGILGIELGAEAGAEIARRSRGTPRIANRLLRRVRDYAEVRADGVITRDIAKYALEVYDVDELGLDRLDRAVLSALTRSFGGGPVGVSTLAVAVGEEATTVEEVCEPFLVRAGMIARTPRGRVATAQAWTHLGMKPPANAVGLGQTGLFD.

The segment at 1–193 (MGRFSEDSAD…FGFTAHMDFY (193 aa)) is large ATPase domain (RuvB-L). ATP-binding positions include L32, R33, G74, K77, T78, S79, 140-142 (EDF), R183, Y193, and R230. T78 serves as a coordination point for Mg(2+). The segment at 194-264 (EPSELERVLA…IAKYALEVYD (71 aa)) is small ATPAse domain (RuvB-S). The interval 267 to 355 (ELGLDRLDRA…VGLGQTGLFD (89 aa)) is head domain (RuvB-H). Residues R322 and R327 each coordinate DNA.

Belongs to the RuvB family. As to quaternary structure, homohexamer. Forms an RuvA(8)-RuvB(12)-Holliday junction (HJ) complex. HJ DNA is sandwiched between 2 RuvA tetramers; dsDNA enters through RuvA and exits via RuvB. An RuvB hexamer assembles on each DNA strand where it exits the tetramer. Each RuvB hexamer is contacted by two RuvA subunits (via domain III) on 2 adjacent RuvB subunits; this complex drives branch migration. In the full resolvosome a probable DNA-RuvA(4)-RuvB(12)-RuvC(2) complex forms which resolves the HJ.

The protein localises to the cytoplasm. It carries out the reaction ATP + H2O = ADP + phosphate + H(+). The RuvA-RuvB-RuvC complex processes Holliday junction (HJ) DNA during genetic recombination and DNA repair, while the RuvA-RuvB complex plays an important role in the rescue of blocked DNA replication forks via replication fork reversal (RFR). RuvA specifically binds to HJ cruciform DNA, conferring on it an open structure. The RuvB hexamer acts as an ATP-dependent pump, pulling dsDNA into and through the RuvAB complex. RuvB forms 2 homohexamers on either side of HJ DNA bound by 1 or 2 RuvA tetramers; 4 subunits per hexamer contact DNA at a time. Coordinated motions by a converter formed by DNA-disengaged RuvB subunits stimulates ATP hydrolysis and nucleotide exchange. Immobilization of the converter enables RuvB to convert the ATP-contained energy into a lever motion, pulling 2 nucleotides of DNA out of the RuvA tetramer per ATP hydrolyzed, thus driving DNA branch migration. The RuvB motors rotate together with the DNA substrate, which together with the progressing nucleotide cycle form the mechanistic basis for DNA recombination by continuous HJ branch migration. Branch migration allows RuvC to scan DNA until it finds its consensus sequence, where it cleaves and resolves cruciform DNA. The protein is Holliday junction branch migration complex subunit RuvB of Mycolicibacterium vanbaalenii (strain DSM 7251 / JCM 13017 / BCRC 16820 / KCTC 9966 / NRRL B-24157 / PYR-1) (Mycobacterium vanbaalenii).